The chain runs to 87 residues: Large ribosomal subunit protein bL31B (87 aa).

This sequence belongs to the bacterial ribosomal protein bL31 family. Type B subfamily. In terms of assembly, part of the 50S ribosomal subunit.

In Corynebacterium kroppenstedtii (strain DSM 44385 / JCM 11950 / CIP 105744 / CCUG 35717), this protein is Large ribosomal subunit protein bL31B.